A 358-amino-acid polypeptide reads, in one-letter code: MDLSLAPTTTTSSDQEQDRDQELTSNIGASSSSGPSGNNNNLPMMMIPPPEKEHMFDKVVTPSDVGKLNRLVIPKQHAERYFPLDSSNNQNGTLLNFQDRNGKMWRFRYSYWNSSQSYVMTKGWSRFVKEKKLDAGDIVSFQRGIGDESERSKLYIDWRHRPDMSLVQAHQFGNFGFNFNFPTTSQYSNRFHPLPEYNSVPIHRGLNIGNHQRSYYNTQRQEFVGYGYGNLAGRCYYTGSPLDHRNIVGSEPLVIDSVPVVPGRLTPVMLPPLPPPPSTAGKRLRLFGVNMECGNDYNQQEESWLVPRGEIGASSSSSSALRLNLSTDHDDDNDDGDDGDDDQFAKKGKSSLSLNFNP.

Residues 1-14 show a composition bias toward polar residues; that stretch reads MDLSLAPTTTTSSD. The disordered stretch occupies residues 1 to 45; it reads MDLSLAPTTTTSSDQEQDRDQELTSNIGASSSSGPSGNNNNLPMM. Residues 25–45 are compositionally biased toward low complexity; it reads SNIGASSSSGPSGNNNNLPMM. The segment at residues 56–162 is a DNA-binding region (TF-B3); the sequence is FDKVVTPSDV…KLYIDWRHRP (107 aa). The disordered stretch occupies residues 310–358; that stretch reads EIGASSSSSSALRLNLSTDHDDDNDDGDDGDDDQFAKKGKSSLSLNFNP. The segment covering 329-342 has biased composition (acidic residues); it reads HDDDNDDGDDGDDD.

It is found in the nucleus. Its function is as follows. Regulates lateral organ growth. Functionally redundant with NGA1, NGA2 and NGA4. The polypeptide is B3 domain-containing transcription factor NGA3 (NGA3) (Arabidopsis thaliana (Mouse-ear cress)).